A 388-amino-acid polypeptide reads, in one-letter code: Zinc finger CCCH domain-containing protein 47 (388 aa).

Disordered regions lie at residues 1-130 (MADP…MAPL) and 144-282 (PLHE…TPSA). Basic and acidic residues-rich tracts occupy residues 61-109 (AAND…KSEV) and 181-193 (PDNH…HLPR). The segment covering 260–274 (ASSSSSSSSAGQQGS) has biased composition (low complexity). 2 C3H1-type zinc fingers span residues 321 to 348 (HHKI…HGEE) and 359 to 388 (GGGG…HGGV).

The polypeptide is Zinc finger CCCH domain-containing protein 47 (Oryza sativa subsp. japonica (Rice)).